Reading from the N-terminus, the 701-residue chain is DNA ligase 2 (701 aa).

Residues 1–10 (MSPAPQNRQP) are compositionally biased toward polar residues. Residues 1–21 (MSPAPQNRQPSGVPVGGQFAA) form a disordered region. NAD(+) contacts are provided by residues 64–68 (DAEFD), 111–112 (SL), and Glu-133. The active-site N6-AMP-lysine intermediate is the Lys-135. Residues Arg-156, Glu-189, Lys-302, and Lys-326 each coordinate NAD(+). Zn(2+) is bound by residues Cys-420, Cys-423, Cys-436, and Cys-441. Low complexity predominate over residues 603 to 613 (KAAPAAGAKAP). The interval 603-623 (KAAPAAGAKAPKLTKPDGKPM) is disordered. In terms of domain architecture, BRCT spans 615-701 (LTKPDGKPMN…FAQMVEDGEV (87 aa)).

The protein belongs to the NAD-dependent DNA ligase family. LigA subfamily. Mg(2+) serves as cofactor. Requires Mn(2+) as cofactor.

It carries out the reaction NAD(+) + (deoxyribonucleotide)n-3'-hydroxyl + 5'-phospho-(deoxyribonucleotide)m = (deoxyribonucleotide)n+m + AMP + beta-nicotinamide D-nucleotide.. Functionally, DNA ligase that catalyzes the formation of phosphodiester linkages between 5'-phosphoryl and 3'-hydroxyl groups in double-stranded DNA using NAD as a coenzyme and as the energy source for the reaction. It is essential for DNA replication and repair of damaged DNA. This is DNA ligase 2 from Pseudarthrobacter chlorophenolicus (strain ATCC 700700 / DSM 12829 / CIP 107037 / JCM 12360 / KCTC 9906 / NCIMB 13794 / A6) (Arthrobacter chlorophenolicus).